The sequence spans 490 residues: Angiopoietin-related protein 1 (490 aa).

A signal peptide spans 1–22; that stretch reads MKAFVWTLSVLLFLLGSGHCKG. Residues 79–167 adopt a coiled-coil conformation; sequence ITRMDLENLK…LNVTTEMLKM (89 aa). Residues asparagine 159 and asparagine 187 are each glycosylated (N-linked (GlcNAc...) asparagine). In terms of domain architecture, Fibrinogen C-terminal spans 270 to 490; sequence FINEGPFKDC…AVQMMIKPID (221 aa). Cystine bridges form between cysteine 279–cysteine 308 and cysteine 431–cysteine 444.

The protein resides in the secreted. In Mus musculus (Mouse), this protein is Angiopoietin-related protein 1 (Angptl1).